Here is a 178-residue protein sequence, read N- to C-terminus: Ribosomal RNA small subunit methyltransferase G (178 aa).

Residues G54, L59, 105 to 106 (LE), and R120 contribute to the S-adenosyl-L-methionine site.

Belongs to the methyltransferase superfamily. RNA methyltransferase RsmG family.

The protein resides in the cytoplasm. It carries out the reaction guanosine(527) in 16S rRNA + S-adenosyl-L-methionine = N(7)-methylguanosine(527) in 16S rRNA + S-adenosyl-L-homocysteine. Its function is as follows. Specifically methylates the N7 position of guanine in position 527 of 16S rRNA. In Helicobacter pylori (strain ATCC 700392 / 26695) (Campylobacter pylori), this protein is Ribosomal RNA small subunit methyltransferase G.